Here is a 22-residue protein sequence, read N- to C-terminus: Oxygen-evolving enhancer protein 2 (22 aa).

Belongs to the PsbP family.

It is found in the plastid. It localises to the chloroplast thylakoid membrane. In terms of biological role, may be involved in the regulation of photosystem II. In Physcomitrium patens (Spreading-leaved earth moss), this protein is Oxygen-evolving enhancer protein 2.